Consider the following 98-residue polypeptide: MLPIHLNLTVAFFLALAGVLIYRSHLMSTLLCLEGMMLSLFILMALMITHFQVFSVSMIPLILLVFSACEAGVGLALLVKISTTHGNDYIQNLNLLQC.

Helical transmembrane passes span 1 to 21 (MLPI…GVLI), 29 to 49 (TLLC…LMIT), and 59 to 79 (IPLI…ALLV).

This sequence belongs to the complex I subunit 4L family. In terms of assembly, core subunit of respiratory chain NADH dehydrogenase (Complex I) which is composed of 45 different subunits.

The protein localises to the mitochondrion inner membrane. It carries out the reaction a ubiquinone + NADH + 5 H(+)(in) = a ubiquinol + NAD(+) + 4 H(+)(out). In terms of biological role, core subunit of the mitochondrial membrane respiratory chain NADH dehydrogenase (Complex I) which catalyzes electron transfer from NADH through the respiratory chain, using ubiquinone as an electron acceptor. Part of the enzyme membrane arm which is embedded in the lipid bilayer and involved in proton translocation. In Phascogale tapoatafa (Common wambenger), this protein is NADH-ubiquinone oxidoreductase chain 4L (MT-ND4L).